The following is a 200-amino-acid chain: WASH complex subunit 3 (200 aa).

A coiled-coil region spans residues 56–76 (SLRIQQIETTLSILEAKLASI). 2 disordered regions span residues 87 to 130 (VRAP…AENI) and 165 to 200 (DPNLLDTPDAAVPDASKKRLEEQDDDSSGSESSFSD).

The protein belongs to the CCDC53 family. In terms of assembly, component of the WASH complex.

This chain is WASH complex subunit 3, found in Danio rerio (Zebrafish).